Reading from the N-terminus, the 319-residue chain is Formimidoylglutamase (319 aa).

His-131, Asp-154, His-156, Asp-158, Cys-248, and Asp-250 together coordinate Mn(2+).

It belongs to the arginase family. Mn(2+) is required as a cofactor.

The enzyme catalyses N-formimidoyl-L-glutamate + H2O = formamide + L-glutamate. It participates in amino-acid degradation; L-histidine degradation into L-glutamate; L-glutamate from N-formimidoyl-L-glutamate (hydrolase route): step 1/1. In terms of biological role, catalyzes the conversion of N-formimidoyl-L-glutamate to L-glutamate and formamide. In Legionella pneumophila (strain Paris), this protein is Formimidoylglutamase.